Consider the following 712-residue polypeptide: Polyribonucleotide nucleotidyltransferase (712 aa).

Positions 484 and 490 each coordinate Mg(2+). Residues 550–609 (PKYKTMDVNPEKIRVLIGPGGKNIKAIIEETGSDVEIQDSGVVNIFAPDTPTLDKTIKLI) enclose the KH domain. The S1 motif domain occupies 619-686 (GEVYDGIVKD…KGGKYSLSRK (68 aa)).

Belongs to the polyribonucleotide nucleotidyltransferase family. Mg(2+) is required as a cofactor.

It localises to the cytoplasm. The enzyme catalyses RNA(n+1) + phosphate = RNA(n) + a ribonucleoside 5'-diphosphate. Involved in mRNA degradation. Catalyzes the phosphorolysis of single-stranded polyribonucleotides processively in the 3'- to 5'-direction. The sequence is that of Polyribonucleotide nucleotidyltransferase from Brachyspira hyodysenteriae (strain ATCC 49526 / WA1).